We begin with the raw amino-acid sequence, 119 residues long: Large ribosomal subunit protein bL20 (119 aa).

The protein belongs to the bacterial ribosomal protein bL20 family.

Binds directly to 23S ribosomal RNA and is necessary for the in vitro assembly process of the 50S ribosomal subunit. It is not involved in the protein synthesizing functions of that subunit. This is Large ribosomal subunit protein bL20 from Polaromonas sp. (strain JS666 / ATCC BAA-500).